Reading from the N-terminus, the 144-residue chain is Large ribosomal subunit protein uL11 (144 aa).

It belongs to the universal ribosomal protein uL11 family. As to quaternary structure, part of the ribosomal stalk of the 50S ribosomal subunit. Interacts with L10 and the large rRNA to form the base of the stalk. L10 forms an elongated spine to which L12 dimers bind in a sequential fashion forming a multimeric L10(L12)X complex. Contacts the CTC protein (RL25). Post-translationally, one or more lysine residues are methylated.

In terms of biological role, forms part of the ribosomal stalk which helps the ribosome interact with GTP-bound translation factors. The protein is Large ribosomal subunit protein uL11 of Deinococcus radiodurans (strain ATCC 13939 / DSM 20539 / JCM 16871 / CCUG 27074 / LMG 4051 / NBRC 15346 / NCIMB 9279 / VKM B-1422 / R1).